The primary structure comprises 276 residues: uncharacterized protein (276 aa).

This is an uncharacterized protein from Acanthamoeba polyphaga mimivirus (APMV).